We begin with the raw amino-acid sequence, 226 residues long: Transmembrane protein 204 (226 aa).

Topologically, residues 1-5 (MTVQK) are cytoplasmic. The chain crosses the membrane as a helical span at residues 6-26 (LVATAVLVALVSLILNNAAAF). At 27–103 (TPNWVYQTLE…LQFDMMRACN (77 aa)) the chain is on the extracellular side. Residues 104–124 (LVATAALAVGQITFILGLTGL) form a helical membrane-spanning segment. The Cytoplasmic portion of the chain corresponds to 125-136 (PLMSPESQCWEE). Residues 137–157 (AMAAAFQLASFVLVIGLVTFY) traverse the membrane as a helical segment. At 158 to 170 (RIGPYTNLSWSCY) the chain is on the extracellular side. Residue Asn-164 is glycosylated (N-linked (GlcNAc...) asparagine). Residues 171 to 191 (LNIGACLLATLAAAMLIWNIL) form a helical membrane-spanning segment. At 192–226 (HRREDCMAPRVIVISRSLTARFRRGLDNDYVESPC) the chain is on the cytoplasmic side.

Its subcellular location is the cell junction. It is found in the adherens junction. It localises to the cell membrane. Functionally, can influence paracellular permeability. Appears to be involved in cell-cell interactions through adherens. This is Transmembrane protein 204 (Tmem204) from Rattus norvegicus (Rat).